A 363-amino-acid polypeptide reads, in one-letter code: NADH-quinone oxidoreductase subunit H (363 aa).

10 helical membrane passes run 29-49 (VLKILMIAIPLIVSVAFYVVW), 62-82 (GPMYVGMGLFQAFADVFKLLF), 94-114 (AIFVIAPLLTLAPSFAAWAVV), 127-147 (VGLLYLLAMTSLGVYGIILAG), 166-186 (VVSYEIAMGFALVGVMIAAGS), 202-222 (FFDWFLIPLFPLFIVYWVSGV), 239-257 (IVAGHMVEYSGSVFALFFL), 264-286 (ILVSFLISIFFLGGWLSPIQGWV), 293-313 (LIDWVWNGGWPWLLLKVLFFA), and 339-359 (FIPLTIVWIAVTALMVFSGVI).

Belongs to the complex I subunit 1 family. In terms of assembly, NDH-1 is composed of 14 different subunits. Subunits NuoA, H, J, K, L, M, N constitute the membrane sector of the complex.

Its subcellular location is the cell inner membrane. The catalysed reaction is a quinone + NADH + 5 H(+)(in) = a quinol + NAD(+) + 4 H(+)(out). Its function is as follows. NDH-1 shuttles electrons from NADH, via FMN and iron-sulfur (Fe-S) centers, to quinones in the respiratory chain. The immediate electron acceptor for the enzyme in this species is believed to be ubiquinone. Couples the redox reaction to proton translocation (for every two electrons transferred, four hydrogen ions are translocated across the cytoplasmic membrane), and thus conserves the redox energy in a proton gradient. This subunit may bind ubiquinone. This is NADH-quinone oxidoreductase subunit H from Xylella fastidiosa (strain Temecula1 / ATCC 700964).